Consider the following 480-residue polypeptide: MFS-type transporter oryF (480 aa).

The segment covering 1-10 (MAEEVNERTR) has biased composition (basic and acidic residues). Positions 1 to 24 (MAEEVNERTRLLSQSDDPSPSLEE) are disordered. The span at 11-22 (LLSQSDDPSPSL) shows a compositional bias: low complexity. Transmembrane regions (helical) follow at residues 41 to 61 (LCIAVISVYGLISPVIAAIIV), 81 to 101 (AFVSVYVLGWSFAPLVVGPLS), 107 to 127 (ISLLNTGHGLFLVFNALCAFA), 138 to 158 (FITGAVGSAPLSIGAGIIGDL), 170 to 190 (LYTLGPLLGPAIAPITGAYIV), 197 to 217 (AIFAWCSLYILITWVVGLCTL), 264 to 284 (FLGTQPIIQVLSLFMGYLFGL), 308 to 328 (ALNYISIAGGFILGSQITGSL), 351 to 371 (ILMLPAALLVPTGLLIYGWSA), 378 to 398 (IMPNIGIGIYALGLIMSYQCI), 415 to 435 (GALTILRSLLGFVLPILAPLI), and 443 to 463 (WGSSLLALWALVMGGLVPILL).

Belongs to the major facilitator superfamily.

The protein localises to the membrane. Functionally, MFS-type transporter; part of the gene cluster that mediates the biosynthesis of oryzines, natural products with an unusual maleidride backbone. The polypeptide is MFS-type transporter oryF (Aspergillus oryzae (strain ATCC 42149 / RIB 40) (Yellow koji mold)).